Reading from the N-terminus, the 271-residue chain is Mannosyl-3-phosphoglycerate phosphatase (271 aa).

Aspartate 13 acts as the Nucleophile in catalysis. Residues aspartate 13, aspartate 15, and aspartate 214 each contribute to the Mg(2+) site.

Belongs to the HAD-like hydrolase superfamily. MPGP family. Requires Mg(2+) as cofactor.

The protein localises to the cytoplasm. The enzyme catalyses 2-O-(alpha-D-mannosyl)-3-phosphoglycerate + H2O = (2R)-2-O-(alpha-D-mannosyl)-glycerate + phosphate. The chain is Mannosyl-3-phosphoglycerate phosphatase (yedP) from Salmonella choleraesuis (strain SC-B67).